We begin with the raw amino-acid sequence, 264 residues long: Forkhead box protein pes-1 (264 aa).

Disordered stretches follow at residues D15–K36 and D50–R93. The span at D50–S64 shows a compositional bias: low complexity. Polar residues predominate over residues E70 to S89. The fork-head DNA-binding region spans R93–R186.

Its subcellular location is the nucleus. The protein localises to the cytoplasm. In terms of biological role, transcription factor. Plays a role in embryogenesis and later development, perhaps acting redundantly with forkhead protein fkh-2. The chain is Forkhead box protein pes-1 from Caenorhabditis elegans.